The chain runs to 289 residues: Acetylglutamate kinase (289 aa).

Residues 60–61, R82, and N186 contribute to the substrate site; that span reads GG.

It belongs to the acetylglutamate kinase family. ArgB subfamily.

Its subcellular location is the cytoplasm. It carries out the reaction N-acetyl-L-glutamate + ATP = N-acetyl-L-glutamyl 5-phosphate + ADP. Its pathway is amino-acid biosynthesis; L-arginine biosynthesis; N(2)-acetyl-L-ornithine from L-glutamate: step 2/4. Catalyzes the ATP-dependent phosphorylation of N-acetyl-L-glutamate. The protein is Acetylglutamate kinase of Methanoculleus marisnigri (strain ATCC 35101 / DSM 1498 / JR1).